The following is a 129-amino-acid chain: Small ribosomal subunit protein uS11 (129 aa).

This sequence belongs to the universal ribosomal protein uS11 family. Part of the 30S ribosomal subunit. Interacts with proteins S7 and S18. Binds to IF-3.

Its function is as follows. Located on the platform of the 30S subunit, it bridges several disparate RNA helices of the 16S rRNA. Forms part of the Shine-Dalgarno cleft in the 70S ribosome. The chain is Small ribosomal subunit protein uS11 from Rhizorhabdus wittichii (strain DSM 6014 / CCUG 31198 / JCM 15750 / NBRC 105917 / EY 4224 / RW1) (Sphingomonas wittichii).